The sequence spans 926 residues: ABC transporter A family member 6 (926 aa).

The next 6 helical transmembrane spans lie at 34-54 (LIVI…VFDS), 336-356 (ASLI…PVIL), 389-409 (FLAI…AIGL), 418-438 (TIQF…AFLV), 451-471 (VAYI…QFLI), and 525-545 (DEVF…TYYI). An ABC transporter domain is found at 610-847 (IVCDNLKKVY…YGGSYVLTIT (238 aa)). 648–655 (GPNGAGKT) contributes to the ATP binding site.

Belongs to the ABC transporter superfamily. ABCA family. CPR flippase (TC 3.A.1.211) subfamily.

It localises to the membrane. The sequence is that of ABC transporter A family member 6 (ABCA6) from Arabidopsis thaliana (Mouse-ear cress).